A 255-amino-acid polypeptide reads, in one-letter code: uncharacterized protein (255 aa).

N-linked (GlcNAc...) asparagine; by host glycosylation is found at Asn-16 and Asn-58. 2 helical membrane passes run Leu-72–Tyr-92 and Leu-104–Cys-124.

The protein resides in the membrane. This is an uncharacterized protein from Acanthamoeba polyphaga (Amoeba).